Reading from the N-terminus, the 172-residue chain is Translation initiation factor IF-3 (172 aa).

The protein belongs to the IF-3 family. As to quaternary structure, monomer.

The protein resides in the cytoplasm. Its function is as follows. IF-3 binds to the 30S ribosomal subunit and shifts the equilibrium between 70S ribosomes and their 50S and 30S subunits in favor of the free subunits, thus enhancing the availability of 30S subunits on which protein synthesis initiation begins. The chain is Translation initiation factor IF-3 from Campylobacter jejuni subsp. jejuni serotype O:6 (strain 81116 / NCTC 11828).